Consider the following 118-residue polypeptide: IgW heavy chain V region W26 (118 aa).

The 109-residue stretch at 1-109 (NIVLTQPESA…PQWGYWGSGT (109 aa)) folds into the Ig-like domain. The cysteines at positions 22 and 93 are disulfide-linked.

Expressed mainly in lymphoid tissues including spleen, epigonal organ and circulating lymphocytes.

This chain is IgW heavy chain V region W26, found in Heterodontus francisci (Horn shark).